The sequence spans 25 residues: Pregnancy-associated glycoprotein 72 (25 aa).

N-linked (GlcNAc...) asparagine glycans are attached at residues asparagine 4 and asparagine 21.

Belongs to the peptidase A1 family. Post-translationally, N-glycosylated. As to expression, expressed in chorionic epithelium (trophectoderm).

It localises to the secreted. The protein localises to the extracellular space. In Bison bison (American bison), this protein is Pregnancy-associated glycoprotein 72.